Here is a 135-residue protein sequence, read N- to C-terminus: Small ribosomal subunit protein uS11 (135 aa).

Positions 1 to 22 are disordered; it reads MPPKSRTAAGAKKVRRKEKKNV.

This sequence belongs to the universal ribosomal protein uS11 family. As to quaternary structure, part of the 30S ribosomal subunit. Interacts with proteins S7 and S18. Binds to IF-3.

Functionally, located on the platform of the 30S subunit, it bridges several disparate RNA helices of the 16S rRNA. Forms part of the Shine-Dalgarno cleft in the 70S ribosome. This chain is Small ribosomal subunit protein uS11, found in Nocardioides sp. (strain ATCC BAA-499 / JS614).